We begin with the raw amino-acid sequence, 208 residues long: Large ribosomal subunit protein uL4 (208 aa).

The tract at residues 44–85 (RQGTKKTKTRAEVRGGGKKPWRQKGTGRARQGSIRAPHWRGG) is disordered. The span at 59–70 (GGKKPWRQKGTG) shows a compositional bias: basic residues.

This sequence belongs to the universal ribosomal protein uL4 family. As to quaternary structure, part of the 50S ribosomal subunit.

In terms of biological role, one of the primary rRNA binding proteins, this protein initially binds near the 5'-end of the 23S rRNA. It is important during the early stages of 50S assembly. It makes multiple contacts with different domains of the 23S rRNA in the assembled 50S subunit and ribosome. Its function is as follows. Forms part of the polypeptide exit tunnel. The polypeptide is Large ribosomal subunit protein uL4 (Mesoplasma florum (strain ATCC 33453 / NBRC 100688 / NCTC 11704 / L1) (Acholeplasma florum)).